A 405-amino-acid polypeptide reads, in one-letter code: Deoxyguanosinetriphosphate triphosphohydrolase-like protein (405 aa).

The HD domain maps to 75–219; the sequence is RLTHTIEVAQ…AAIADDIAYN (145 aa).

The protein belongs to the dGTPase family. Type 2 subfamily.

The polypeptide is Deoxyguanosinetriphosphate triphosphohydrolase-like protein (Rhizobium etli (strain CIAT 652)).